The following is a 208-amino-acid chain: Small ribosomal subunit protein uS4 (208 aa).

One can recognise an S4 RNA-binding domain in the interval 98 to 158 (RRLDNVVYRL…EKSRKIACIN (61 aa)).

It belongs to the universal ribosomal protein uS4 family. Part of the 30S ribosomal subunit. Contacts protein S5. The interaction surface between S4 and S5 is involved in control of translational fidelity.

One of the primary rRNA binding proteins, it binds directly to 16S rRNA where it nucleates assembly of the body of the 30S subunit. In terms of biological role, with S5 and S12 plays an important role in translational accuracy. This Geobacter sulfurreducens (strain ATCC 51573 / DSM 12127 / PCA) protein is Small ribosomal subunit protein uS4.